The chain runs to 509 residues: Poly(A) RNA polymerase GLD2-B (509 aa).

The interval 88-125 is disordered; it reads PGSPPSSFQNRKRRSDEGNSPYDVKRQRFQSPQEQTVN. Residues 116–125 are compositionally biased toward polar residues; it reads FQSPQEQTVN. Positions 240 and 242 each coordinate Mg(2+). One can recognise a PAP-associated domain in the interval 409–462; that stretch reads LGDLLLGFLKYFAVEFDWSKDIISLREAKALPRTDDYEWRNKYICVEEPFDGSN.

It belongs to the DNA polymerase type-B-like family. GLD2 subfamily. In terms of assembly, component of a complex at least composed of cpeb1, cpsf1, tent2/gld2, pabpc1/ePAB, parn and sympk. Following oocyte maturation, parn is expelled from the complex. Interacts with rbfox2. Interacts with sympk. Requires Mg(2+) as cofactor. Mn(2+) serves as cofactor.

It is found in the cytoplasm. The enzyme catalyses RNA(n) + ATP = RNA(n)-3'-adenine ribonucleotide + diphosphate. In terms of biological role, cytoplasmic poly(A) RNA polymerase that adds successive AMP monomers to the 3'-end of specific RNAs, forming a poly(A) tail. In contrast to the canonical nuclear poly(A) RNA polymerase, it only adds poly(A) to selected cytoplasmic mRNAs during oocyte maturation. Plays a central role during oocyte maturation by mediating polyadenylation of dormant mRNAs, which contain 5'AAUAAA-3' sequence in their 3'-UTR. In immature oocytes, polyadenylation of poly(A) tails is counteracted by the ribonuclease parn. During maturation parn is excluded from the ribonucleoprotein complex, allowing poly(A) elongation and activation of mRNAs. May not play a role in replication-dependent histone mRNA degradation. The chain is Poly(A) RNA polymerase GLD2-B from Xenopus laevis (African clawed frog).